The primary structure comprises 367 residues: 3-dehydroquinate synthase (367 aa).

NAD(+) is bound by residues 69–74 (DGEAFK), 103–107 (GVIGD), 127–128 (TT), Lys-140, and Lys-149. Residues Glu-182, His-245, and His-262 each contribute to the Zn(2+) site.

It belongs to the sugar phosphate cyclases superfamily. Dehydroquinate synthase family. It depends on Co(2+) as a cofactor. Zn(2+) is required as a cofactor. The cofactor is NAD(+).

It is found in the cytoplasm. The catalysed reaction is 7-phospho-2-dehydro-3-deoxy-D-arabino-heptonate = 3-dehydroquinate + phosphate. Its pathway is metabolic intermediate biosynthesis; chorismate biosynthesis; chorismate from D-erythrose 4-phosphate and phosphoenolpyruvate: step 2/7. Catalyzes the conversion of 3-deoxy-D-arabino-heptulosonate 7-phosphate (DAHP) to dehydroquinate (DHQ). The sequence is that of 3-dehydroquinate synthase from Ectopseudomonas mendocina (strain ymp) (Pseudomonas mendocina).